Reading from the N-terminus, the 545-residue chain is ATP synthase subunit alpha (545 aa).

173–180 serves as a coordination point for ATP; the sequence is GDRQTGKT.

Belongs to the ATPase alpha/beta chains family. As to quaternary structure, F-type ATPases have 2 components, CF(1) - the catalytic core - and CF(0) - the membrane proton channel. CF(1) has five subunits: alpha(3), beta(3), gamma(1), delta(1), epsilon(1). CF(0) has three main subunits: a(1), b(2) and c(9-12). The alpha and beta chains form an alternating ring which encloses part of the gamma chain. CF(1) is attached to CF(0) by a central stalk formed by the gamma and epsilon chains, while a peripheral stalk is formed by the delta and b chains.

It localises to the cell membrane. It catalyses the reaction ATP + H2O + 4 H(+)(in) = ADP + phosphate + 5 H(+)(out). Functionally, produces ATP from ADP in the presence of a proton gradient across the membrane. The alpha chain is a regulatory subunit. This chain is ATP synthase subunit alpha, found in Clavibacter sepedonicus (Clavibacter michiganensis subsp. sepedonicus).